A 633-amino-acid chain; its full sequence is Probable potassium transport system protein Kup 3 (633 aa).

Helical transmembrane passes span 24–44, 61–81, 114–134, 148–168, 180–200, 222–242, 258–278, 298–318, 348–368, 377–397, 405–425, and 427–447; these read LVLA…LYAF, VLGI…LKYV, LVLG…TPAI, PALS…LFFV, FGPV…IHIF, IGSA…AEAL, WFSL…AFVL, IPMV…VISG, IFMP…VLFF, AYGI…FIVM, LTAA…FLAA, and IAKF…MALI.

This sequence belongs to the HAK/KUP transporter (TC 2.A.72) family.

It is found in the cell inner membrane. It carries out the reaction K(+)(in) + H(+)(in) = K(+)(out) + H(+)(out). Transport of potassium into the cell. Likely operates as a K(+):H(+) symporter. This is Probable potassium transport system protein Kup 3 from Rhizobium johnstonii (strain DSM 114642 / LMG 32736 / 3841) (Rhizobium leguminosarum bv. viciae).